The chain runs to 176 residues: NAD(P)H-quinone oxidoreductase subunit 6, chloroplastic (176 aa).

5 consecutive transmembrane segments (helical) span residues 10 to 30 (FLLV…VLLP), 32 to 52 (PIFS…LYIL), 61 to 81 (AQLL…VMFM), 92 to 112 (LWTV…FLLM), and 152 to 172 (FFLP…GAIS).

This sequence belongs to the complex I subunit 6 family. NDH is composed of at least 16 different subunits, 5 of which are encoded in the nucleus.

Its subcellular location is the plastid. It localises to the chloroplast thylakoid membrane. It catalyses the reaction a plastoquinone + NADH + (n+1) H(+)(in) = a plastoquinol + NAD(+) + n H(+)(out). The enzyme catalyses a plastoquinone + NADPH + (n+1) H(+)(in) = a plastoquinol + NADP(+) + n H(+)(out). In terms of biological role, NDH shuttles electrons from NAD(P)H:plastoquinone, via FMN and iron-sulfur (Fe-S) centers, to quinones in the photosynthetic chain and possibly in a chloroplast respiratory chain. The immediate electron acceptor for the enzyme in this species is believed to be plastoquinone. Couples the redox reaction to proton translocation, and thus conserves the redox energy in a proton gradient. This is NAD(P)H-quinone oxidoreductase subunit 6, chloroplastic (ndhG) from Olimarabidopsis pumila (Dwarf rocket).